The chain runs to 188 residues: Elongation factor P (188 aa).

The protein belongs to the elongation factor P family.

The protein localises to the cytoplasm. It functions in the pathway protein biosynthesis; polypeptide chain elongation. Involved in peptide bond synthesis. Stimulates efficient translation and peptide-bond synthesis on native or reconstituted 70S ribosomes in vitro. Probably functions indirectly by altering the affinity of the ribosome for aminoacyl-tRNA, thus increasing their reactivity as acceptors for peptidyl transferase. The chain is Elongation factor P from Nitrobacter winogradskyi (strain ATCC 25391 / DSM 10237 / CIP 104748 / NCIMB 11846 / Nb-255).